A 201-amino-acid chain; its full sequence is Outer-membrane lipoprotein LolB (201 aa).

Positions 1 to 18 are cleaved as a signal peptide; it reads MKWCRLSIILMSLILLAG. Cysteine 19 carries the N-palmitoyl cysteine lipid modification. Residue cysteine 19 is the site of S-diacylglycerol cysteine attachment.

The protein belongs to the LolB family. As to quaternary structure, monomer.

The protein resides in the cell outer membrane. Its function is as follows. Plays a critical role in the incorporation of lipoproteins in the outer membrane after they are released by the LolA protein. In Nitrosococcus oceani (strain ATCC 19707 / BCRC 17464 / JCM 30415 / NCIMB 11848 / C-107), this protein is Outer-membrane lipoprotein LolB.